The chain runs to 661 residues: UvrABC system protein B (661 aa).

The Helicase ATP-binding domain occupies 28–414; sequence KGVKEGKRHQ…HTDEMIEQII (387 aa). ATP is bound at residue 41-48; it reads GATGTGKT. Residues 94 to 117 carry the Beta-hairpin motif; that stretch reads YYDYYQPEAYVPSTDTFIEKDASI. Residues 432 to 598 form the Helicase C-terminal domain; the sequence is QIDDLLSEIQ…TINKKIHDVI (167 aa). A disordered region spans residues 604 to 625; that stretch reads NDETNEKQQTELPKKMTKKERQ. Residues 607 to 617 are compositionally biased toward basic and acidic residues; sequence TNEKQQTELPK. Residues 625–660 form the UVR domain; sequence QKTIENIEKEMKKAAKDLDFEKATELRDMLFELKSE.

The protein belongs to the UvrB family. As to quaternary structure, forms a heterotetramer with UvrA during the search for lesions. Interacts with UvrC in an incision complex.

It is found in the cytoplasm. The UvrABC repair system catalyzes the recognition and processing of DNA lesions. A damage recognition complex composed of 2 UvrA and 2 UvrB subunits scans DNA for abnormalities. Upon binding of the UvrA(2)B(2) complex to a putative damaged site, the DNA wraps around one UvrB monomer. DNA wrap is dependent on ATP binding by UvrB and probably causes local melting of the DNA helix, facilitating insertion of UvrB beta-hairpin between the DNA strands. Then UvrB probes one DNA strand for the presence of a lesion. If a lesion is found the UvrA subunits dissociate and the UvrB-DNA preincision complex is formed. This complex is subsequently bound by UvrC and the second UvrB is released. If no lesion is found, the DNA wraps around the other UvrB subunit that will check the other stand for damage. The polypeptide is UvrABC system protein B (Staphylococcus haemolyticus (strain JCSC1435)).